The sequence spans 156 residues: Ribosomal RNA large subunit methyltransferase H (156 aa).

Residues Leu-73, Gly-104, and 123 to 128 (LSPLTL) each bind S-adenosyl-L-methionine.

This sequence belongs to the RNA methyltransferase RlmH family. Homodimer.

The protein resides in the cytoplasm. The catalysed reaction is pseudouridine(1915) in 23S rRNA + S-adenosyl-L-methionine = N(3)-methylpseudouridine(1915) in 23S rRNA + S-adenosyl-L-homocysteine + H(+). Specifically methylates the pseudouridine at position 1915 (m3Psi1915) in 23S rRNA. This is Ribosomal RNA large subunit methyltransferase H from Photobacterium profundum (strain SS9).